A 533-amino-acid polypeptide reads, in one-letter code: (E)-beta-farnesene synthase (533 aa).

Positions 286, 290, 430, 434, and 438 each coordinate Mg(2+). Residues 286-290 carry the DDXXD motif motif; sequence DDMMD.

This sequence belongs to the terpene synthase family. Mg(2+) serves as cofactor. Co(2+) is required as a cofactor. Requires Mn(2+) as cofactor.

The protein localises to the cytoplasm. The catalysed reaction is (2E,6E)-farnesyl diphosphate = (E)-beta-farnesene + diphosphate. Its pathway is secondary metabolite biosynthesis; terpenoid biosynthesis. In terms of biological role, sesquiterpene cyclase catalyzing the production of sixfold more beta-farnesene than alpha-bergamotene from farnesyl diphosphate. Involved in indirect defense by producing volatile signals attracting natural enemies of herbivores. The chain is (E)-beta-farnesene synthase from Zea diploperennis (Diploperennial teosinte).